The chain runs to 556 residues: Phosphoenolpyruvate-protein phosphotransferase (556 aa).

His186 functions as the Tele-phosphohistidine intermediate in the catalytic mechanism. Arg288 and Arg325 together coordinate phosphoenolpyruvate. Mg(2+) is bound by residues Glu415 and Asp439. Residues 438–439 (ND) and Arg449 each bind phosphoenolpyruvate. Catalysis depends on Cys486, which acts as the Proton donor.

Belongs to the PEP-utilizing enzyme family. Homodimer. It depends on Mg(2+) as a cofactor.

It localises to the cytoplasm. It carries out the reaction L-histidyl-[protein] + phosphoenolpyruvate = N(pros)-phospho-L-histidyl-[protein] + pyruvate. In terms of biological role, general (non sugar-specific) component of the phosphoenolpyruvate-dependent sugar phosphotransferase system (sugar PTS). This major carbohydrate active-transport system catalyzes the phosphorylation of incoming sugar substrates concomitantly with their translocation across the cell membrane. Enzyme I transfers the phosphoryl group from phosphoenolpyruvate (PEP) to the phosphoryl carrier protein (HPr). The chain is Phosphoenolpyruvate-protein phosphotransferase (ptsI) from Streptomyces coelicolor (strain ATCC BAA-471 / A3(2) / M145).